We begin with the raw amino-acid sequence, 285 residues long: Acetylglutamate kinase (285 aa).

Substrate-binding positions include 63–64 (GG), R85, and N178.

Belongs to the acetylglutamate kinase family. ArgB subfamily.

The protein localises to the cytoplasm. It catalyses the reaction N-acetyl-L-glutamate + ATP = N-acetyl-L-glutamyl 5-phosphate + ADP. It participates in amino-acid biosynthesis; L-arginine biosynthesis; N(2)-acetyl-L-ornithine from L-glutamate: step 2/4. Functionally, catalyzes the ATP-dependent phosphorylation of N-acetyl-L-glutamate. The sequence is that of Acetylglutamate kinase from Synechococcus sp. (strain CC9311).